The following is a 587-amino-acid chain: Bifunctional lycopene cyclase/phytoene synthase (587 aa).

The lycopene beta-cyclase stretch occupies residues 1-236 (MGLDYILVHV…IVFGLVCIDY (236 aa)). 7 helical membrane-spanning segments follow: residues 5–25 (YILV…LVYW), 35–55 (KIST…SYLV), 65–85 (NGVI…FFII), 91–111 (SLVY…GTVA), 116–136 (LIGA…LCFG), 145–165 (IITW…GFII), and 218–238 (LFFL…DYAI). Residues 243–587 (CELVQSPQAV…VAYRAMAWRK (345 aa)) are phytoene synthase.

This sequence in the N-terminal section; belongs to the lycopene beta-cyclase family. In the C-terminal section; belongs to the phytoene/squalene synthase family.

It localises to the membrane. The catalysed reaction is all-trans-lycopene = gamma-carotene. It catalyses the reaction gamma-carotene = all-trans-beta-carotene. The enzyme catalyses 2 (2E,6E,10E)-geranylgeranyl diphosphate = 15-cis-phytoene + 2 diphosphate. The protein operates within carotenoid biosynthesis; beta-carotene biosynthesis. It functions in the pathway carotenoid biosynthesis; phytoene biosynthesis; all-trans-phytoene from geranylgeranyl diphosphate: step 1/1. Functionally, bifunctional enzyme that catalyzes the reactions from geranylgeranyl diphosphate to phytoene (phytoene synthase) and lycopene to beta-carotene via the intermediate gamma-carotene (lycopene cyclase). The sequence is that of Bifunctional lycopene cyclase/phytoene synthase from Aspergillus oryzae (strain ATCC 42149 / RIB 40) (Yellow koji mold).